A 223-amino-acid polypeptide reads, in one-letter code: Kinetochore protein Spc25 (223 aa).

Residues 65–115 (LRCGELEKRANFMEELTQELEATKQRNLVMRDQIKQLNVLARQHRNEVMES) adopt a coiled-coil conformation.

It belongs to the SPC25 family. Component of the Ndc80 complex, which is composed of Ndc80, Nuf2 and Spc25.

Its subcellular location is the nucleus. The protein localises to the chromosome. The protein resides in the centromere. It is found in the kinetochore. Acts as a component of the essential kinetochore-associated Ndc80 complex, which is required for chromosome segregation and spindle checkpoint activity during meiosis and mitosis. Required for kinetochore integrity and the organization of stable microtubule binding sites in the outer plate of the kinetochore. Participates in SAC signaling that responds specifically to disruptions in spindle microtubule dynamics. The NDC80 complex synergistically enhances the affinity of the SKA1 complex for microtubules and may allow the NDC80 complex to track depolymerizing microtubules. The polypeptide is Kinetochore protein Spc25 (Drosophila lutescens (Fruit fly)).